A 304-amino-acid polypeptide reads, in one-letter code: MDSSSFSFSHLDRLEAESIHILREVVAEFRNPVLLYSVGKDSSVLLHLLLKAFSPAPPPIPLLHVDTRWKFREMITFRDRRVAETGVQLRVHINPEGVAQEINPITHGAAVHTDVMKTQGLRQALEQGQFDAAIGGARRDEEKSRAKERVFSFRNAHHRWDPKNQRPELWNVYNARIHPGESVRVFPLSNWTELDVWLYIYREKIPVVPLYFAAPRPVVERDGMLILVDDERLPLRPGEVSKLLWVRFRTLGCYPLTGAVESRAATLEDIIAEMLLTPFSERQGRLIDYVPGASMESKKIEGYF.

It belongs to the PAPS reductase family. CysD subfamily. Heterodimer composed of CysD, the smaller subunit, and CysNC.

It catalyses the reaction sulfate + ATP + H(+) = adenosine 5'-phosphosulfate + diphosphate. Its pathway is sulfur metabolism; hydrogen sulfide biosynthesis; sulfite from sulfate: step 1/3. Functionally, with CysN forms the ATP sulfurylase (ATPS) that catalyzes the adenylation of sulfate producing adenosine 5'-phosphosulfate (APS) and diphosphate, the first enzymatic step in sulfur assimilation pathway. APS synthesis involves the formation of a high-energy phosphoric-sulfuric acid anhydride bond driven by GTP hydrolysis by CysN coupled to ATP hydrolysis by CysD. The protein is Sulfate adenylyltransferase subunit 2 of Xylella fastidiosa (strain 9a5c).